The following is a 397-amino-acid chain: ATP-dependent RNA helicase RhlB (397 aa).

The Q motif motif lies at 9 to 37 (TRFHDFNLAPSLMHAIHDLGFPYCTPIQA). Residues 40–220 (LGFTLRGQDA…KQWTVDPAIV (181 aa)) enclose the Helicase ATP-binding domain. 53-60 (AQTGTGKT) is an ATP binding site. A DEAD box motif is present at residues 166–169 (DEAD). The region spanning 243–393 (DKYKLLYNLV…MPPAELLKPV (151 aa)) is the Helicase C-terminal domain.

The protein belongs to the DEAD box helicase family. RhlB subfamily. Component of the RNA degradosome, which is a multiprotein complex involved in RNA processing and mRNA degradation.

The protein resides in the cytoplasm. It catalyses the reaction ATP + H2O = ADP + phosphate + H(+). DEAD-box RNA helicase involved in RNA degradation. Has RNA-dependent ATPase activity and unwinds double-stranded RNA. This is ATP-dependent RNA helicase RhlB from Pseudomonas aeruginosa (strain UCBPP-PA14).